The sequence spans 166 residues: NAD(P)H-quinone oxidoreductase subunit I, chloroplastic (166 aa).

4Fe-4S ferredoxin-type domains are found at residues 55–84 and 95–124; these read GRIHFEFDKCIACEVCVRVCPIDLPVVDWK and LNYSIDFGICIFCGNCVEYCPTNCLSMTEE. Residues cysteine 64, cysteine 67, cysteine 70, cysteine 74, cysteine 104, cysteine 107, cysteine 110, and cysteine 114 each coordinate [4Fe-4S] cluster.

The protein belongs to the complex I 23 kDa subunit family. In terms of assembly, NDH is composed of at least 16 different subunits, 5 of which are encoded in the nucleus. The cofactor is [4Fe-4S] cluster.

The protein localises to the plastid. The protein resides in the chloroplast thylakoid membrane. The catalysed reaction is a plastoquinone + NADH + (n+1) H(+)(in) = a plastoquinol + NAD(+) + n H(+)(out). It catalyses the reaction a plastoquinone + NADPH + (n+1) H(+)(in) = a plastoquinol + NADP(+) + n H(+)(out). Functionally, NDH shuttles electrons from NAD(P)H:plastoquinone, via FMN and iron-sulfur (Fe-S) centers, to quinones in the photosynthetic chain and possibly in a chloroplast respiratory chain. The immediate electron acceptor for the enzyme in this species is believed to be plastoquinone. Couples the redox reaction to proton translocation, and thus conserves the redox energy in a proton gradient. This chain is NAD(P)H-quinone oxidoreductase subunit I, chloroplastic, found in Guardiola tulocarpus.